The chain runs to 179 residues: Small heat shock protein hspK (179 aa).

One can recognise a sHSP domain in the interval 32–178; sequence HRINIWRPTV…DRLKIPIQSK (147 aa). The tract at residues 80–122 is disordered; it reads KKSKGGLNNLPSSSSSINSDSTTNTNTNTTTTTTTAPPPPSDA. Low complexity predominate over residues 87–114; sequence NNLPSSSSSINSDSTTNTNTNTTTTTTT.

The protein belongs to the small heat shock protein (HSP20) family.

The protein is Small heat shock protein hspK (hspK) of Dictyostelium discoideum (Social amoeba).